The chain runs to 201 residues: Small ribosomal subunit protein uS4 (201 aa).

The region spanning 91–151 (ARLDNVIYRA…DRSRSMLWFD (61 aa)) is the S4 RNA-binding domain.

It belongs to the universal ribosomal protein uS4 family. In terms of assembly, part of the 30S ribosomal subunit. Contacts protein S5. The interaction surface between S4 and S5 is involved in control of translational fidelity.

Its function is as follows. One of the primary rRNA binding proteins, it binds directly to 16S rRNA where it nucleates assembly of the body of the 30S subunit. With S5 and S12 plays an important role in translational accuracy. The sequence is that of Small ribosomal subunit protein uS4 from Corynebacterium urealyticum (strain ATCC 43042 / DSM 7109).